Here is a 434-residue protein sequence, read N- to C-terminus: GTPase Der (434 aa).

EngA-type G domains follow at residues 3-167 (NIVA…PEIE) and 175-350 (PRFA…ESRS). GTP is bound by residues 9–16 (GRPNVGKS), 56–60 (DTGGY), 119–122 (NKVD), 181–188 (GRPNAGKS), 228–232 (DTAGI), and 293–296 (NKWD). In terms of domain architecture, KH-like spans 351 to 434 (KKIKTRQFND…VPISIFFRKK (84 aa)).

The protein belongs to the TRAFAC class TrmE-Era-EngA-EngB-Septin-like GTPase superfamily. EngA (Der) GTPase family. As to quaternary structure, associates with the 50S ribosomal subunit.

Its function is as follows. GTPase that plays an essential role in the late steps of ribosome biogenesis. The sequence is that of GTPase Der from Christiangramia forsetii (strain DSM 17595 / CGMCC 1.15422 / KT0803) (Gramella forsetii).